The sequence spans 287 residues: Aquaporin PIP2-1 (287 aa).

Residue M1 is modified to N-acetylmethionine. The Cytoplasmic segment spans residues 2–39 (AKDVEAVPGEGFQTRDYQDPPPAPFIDGAELKKWSFYR). The residue at position 3 (K3) is an N6,N6-dimethyllysine; partial. Residues 40–60 (AVIAEFVATLLFLYITVLTVI) traverse the membrane as a helical segment. Residues 61 to 83 (GYKIQSDTDAGGVDCGGVGILGI) are Extracellular-facing. The chain crosses the membrane as a helical span at residues 84–104 (AWAFGGMIFILVYCTAGISGG). Topologically, residues 105–125 (HINPAVTFGLFLARKVSLPRA) are cytoplasmic. The short motif at 107-109 (NPA) is the NPA 1 element. A helical transmembrane segment spans residues 126–146 (LLYIIAQCLGAICGVGFVKAF). Residues 147-167 (QSSYYTRYGGGANSLADGYST) are Extracellular-facing. A helical transmembrane segment spans residues 168–188 (GTGLAAEIIGTFVLVYTVFSA). Residues 189 to 201 (TDPKRSARDSHVP) are Cytoplasmic-facing. Residues 202 to 222 (VLAPLPIGFAVFMVHLATIPI) form a helical membrane-spanning segment. Over 223 to 249 (TGTGINPARSFGAAVIYNKSKPWDDHW) the chain is Extracellular. The NPA 2 signature appears at 228–230 (NPA). Residues 250-270 (IFWVGPFIGAAIAAFYHQFVL) traverse the membrane as a helical segment. Topologically, residues 271-287 (RASGSKSLGSFRSAANV) are cytoplasmic. S280 and S283 each carry phosphoserine.

The protein belongs to the MIP/aquaporin (TC 1.A.8) family. PIP (TC 1.A.8.11) subfamily. Ubiquitinated by RMA1, leading to proteasomal degradation. In terms of processing, the phosphorylation at Ser-280 and Ser-283 is altered by salt (NaCl) and hydrogen peroxide H(2)O(2) treatments. Phosphorylation of Ser-283 is required for plasma membrane targeting. As to expression, predominantly expressed in roots and green siliques. Also expressed at lower level above ground and in flower buds.

The protein localises to the cell membrane. Functionally, water channel required to facilitate the transport of water across cell membrane. Probably involved in root water uptake. Its function is impaired by Hg(2+). In Arabidopsis thaliana (Mouse-ear cress), this protein is Aquaporin PIP2-1 (PIP2-1).